Consider the following 187-residue polypeptide: Putative manganese efflux pump MntP (187 aa).

The next 6 membrane-spanning stretches (helical) occupy residues 3 to 23 (WLTI…VALA), 39 to 59 (LGFH…LLGM), 65 to 85 (ISAY…GRMV), 103 to 123 (GMTM…VGLS), 124 to 144 (IAML…VAGV), and 166 to 186 (ICGG…HTLL).

Belongs to the MntP (TC 9.B.29) family.

The protein localises to the cell inner membrane. Functionally, probably functions as a manganese efflux pump. The protein is Putative manganese efflux pump MntP of Geobacter sp. (strain M21).